We begin with the raw amino-acid sequence, 453 residues long: uncharacterized protein (453 aa).

2 disordered regions span residues 140–161 and 311–332; these read YGES…TRPQ and TTTR…SASS.

This is an uncharacterized protein from Caenorhabditis elegans.